Reading from the N-terminus, the 580-residue chain is Membrane protein insertase YidC (580 aa).

The next 6 membrane-spanning stretches (helical) occupy residues 5-25 (SVTG…FMSP), 259-279 (KYFV…LDGS), 362-382 (GLII…LSLA), 427-447 (LGGC…FYVF), 477-497 (IPMY…TVFV), and 513-533 (IMLY…PSGL).

The protein belongs to the OXA1/ALB3/YidC family. Type 1 subfamily. In terms of assembly, interacts with the Sec translocase complex via SecD. Specifically interacts with transmembrane segments of nascent integral membrane proteins during membrane integration.

It localises to the cell inner membrane. In terms of biological role, required for the insertion and/or proper folding and/or complex formation of integral membrane proteins into the membrane. Involved in integration of membrane proteins that insert both dependently and independently of the Sec translocase complex, as well as at least some lipoproteins. Aids folding of multispanning membrane proteins. This Chlorobium phaeovibrioides (strain DSM 265 / 1930) (Prosthecochloris vibrioformis (strain DSM 265)) protein is Membrane protein insertase YidC.